A 453-amino-acid polypeptide reads, in one-letter code: Endoglucanase A (453 aa).

Residues 1–26 (MNCRKYLLSGLAVFGLAATSAVAALS) form the signal peptide. D82 acts as the Nucleophile in catalysis. Residues 115-126 (TTPTTRKPTTTP) form a linker ('hinge') (Pro-Thr box) region. The active site involves H417.

Belongs to the glycosyl hydrolase 9 (cellulase E) family. In terms of assembly, monomer.

It is found in the periplasm. The catalysed reaction is Endohydrolysis of (1-&gt;4)-beta-D-glucosidic linkages in cellulose, lichenin and cereal beta-D-glucans.. In terms of biological role, high levels of endoglucanase activity detected on acid-swollen cellulose, ball-milled cellulose, and carboxymethyl cellulose; moderate levels detected on filter paper, phosphoric acid-swollen cellulose, lichenan, and xylan. The protein is Endoglucanase A (endA) of Fibrobacter succinogenes (Bacteroides succinogenes).